The sequence spans 119 residues: Large ribosomal subunit protein uL14m (119 aa).

It belongs to the universal ribosomal protein uL14 family.

The protein resides in the mitochondrion. This chain is Large ribosomal subunit protein uL14m, found in Tetrahymena pyriformis.